A 215-amino-acid polypeptide reads, in one-letter code: Redox-sensing transcriptional repressor Rex (215 aa).

The H-T-H motif DNA-binding region spans 18-57; that stretch reads LYYRFLKNLHASGKQRVSSAELSDAVKVDSATIRRDFSYF. 92-97 is a binding site for NAD(+); sequence GVGNLG.

Belongs to the transcriptional regulatory Rex family. In terms of assembly, homodimer.

The protein resides in the cytoplasm. Modulates transcription in response to changes in cellular NADH/NAD(+) redox state. The polypeptide is Redox-sensing transcriptional repressor Rex (Bacillus velezensis (strain DSM 23117 / BGSC 10A6 / LMG 26770 / FZB42) (Bacillus amyloliquefaciens subsp. plantarum)).